The primary structure comprises 242 residues: NAD-dependent protein deacetylase (242 aa).

The Deacetylase sirtuin-type domain occupies 1 to 242 (MQQFEEVHSI…EFVEGLSSRK (242 aa)). Positions 23, 27, 34, 35, 102, 104, 105, and 120 each coordinate NAD(+). Phenylalanine 34 is a nicotinamide binding site. The nicotinamide site is built by isoleucine 104 and aspartate 105. The active-site Proton acceptor is the histidine 120. Positions 128, 131, 148, and 151 each coordinate Zn(2+). 4 residues coordinate NAD(+): threonine 187, serine 188, asparagine 213, and isoleucine 231.

It belongs to the sirtuin family. Class U subfamily. Requires Zn(2+) as cofactor.

The protein localises to the cytoplasm. The catalysed reaction is N(6)-acetyl-L-lysyl-[protein] + NAD(+) + H2O = 2''-O-acetyl-ADP-D-ribose + nicotinamide + L-lysyl-[protein]. Its function is as follows. NAD-dependent protein deacetylase which modulates the activities of several enzymes which are inactive in their acetylated form. This Bacillus cereus (strain ATCC 10987 / NRS 248) protein is NAD-dependent protein deacetylase.